A 409-amino-acid chain; its full sequence is Phospho-N-acetylmuramoyl-pentapeptide-transferase (409 aa).

A run of 10 helical transmembrane segments spans residues 23–43, 73–93, 95–115, 132–152, 214–234, 247–267, 279–299, 305–325, 331–351, and 386–406; these read YITFRSALAIIMSLLISTIFG, TPTMGGLIIIFSTLLPVLLLA, LNNIYIILLIVTTIWMGAIGF, GIFKVIGQVGLGLIVGTTLYF, YAWLIFIPIVIFIITAVSNGA, TSAISVIAIGVFTFVSGNVIF, SGEMTVFIAAFVGALIGFLWY, AVFMGDTGSLTIGGIIAVLAI, MLIPVFCGIFLAENLSVVLQV, and KIVTRFWIVGILLAIVSIVTL.

Belongs to the glycosyltransferase 4 family. MraY subfamily. Mg(2+) is required as a cofactor.

Its subcellular location is the cell inner membrane. The catalysed reaction is UDP-N-acetyl-alpha-D-muramoyl-L-alanyl-gamma-D-glutamyl-meso-2,6-diaminopimeloyl-D-alanyl-D-alanine + di-trans,octa-cis-undecaprenyl phosphate = di-trans,octa-cis-undecaprenyl diphospho-N-acetyl-alpha-D-muramoyl-L-alanyl-D-glutamyl-meso-2,6-diaminopimeloyl-D-alanyl-D-alanine + UMP. Its pathway is cell wall biogenesis; peptidoglycan biosynthesis. In terms of biological role, catalyzes the initial step of the lipid cycle reactions in the biosynthesis of the cell wall peptidoglycan: transfers peptidoglycan precursor phospho-MurNAc-pentapeptide from UDP-MurNAc-pentapeptide onto the lipid carrier undecaprenyl phosphate, yielding undecaprenyl-pyrophosphoryl-MurNAc-pentapeptide, known as lipid I. This is Phospho-N-acetylmuramoyl-pentapeptide-transferase from Flavobacterium psychrophilum (strain ATCC 49511 / DSM 21280 / CIP 103535 / JIP02/86).